Reading from the N-terminus, the 362-residue chain is 3-isopropylmalate dehydrogenase (362 aa).

78-91 (GPQWDTLPSDKRPE) contacts NAD(+). Positions 98, 108, 136, and 226 each coordinate substrate. The Mg(2+) site is built by Asp-226, Asp-250, and Asp-254. 284–296 (GSAPDIAGQDKAN) lines the NAD(+) pocket.

Belongs to the isocitrate and isopropylmalate dehydrogenases family. LeuB type 1 subfamily. As to quaternary structure, homodimer. It depends on Mg(2+) as a cofactor. Mn(2+) is required as a cofactor.

The protein resides in the cytoplasm. It carries out the reaction (2R,3S)-3-isopropylmalate + NAD(+) = 4-methyl-2-oxopentanoate + CO2 + NADH. It functions in the pathway amino-acid biosynthesis; L-leucine biosynthesis; L-leucine from 3-methyl-2-oxobutanoate: step 3/4. Its function is as follows. Catalyzes the oxidation of 3-carboxy-2-hydroxy-4-methylpentanoate (3-isopropylmalate) to 3-carboxy-4-methyl-2-oxopentanoate. The product decarboxylates to 4-methyl-2 oxopentanoate. This Gloeobacter violaceus (strain ATCC 29082 / PCC 7421) protein is 3-isopropylmalate dehydrogenase.